Here is a 141-residue protein sequence, read N- to C-terminus: Hemoglobin subunit alpha-A (141 aa).

In terms of domain architecture, Globin spans 1 to 141; the sequence is VLSAADKTNV…VGTVLTAKYR (141 aa). O2 is bound at residue H58. H87 is a binding site for heme b.

This sequence belongs to the globin family. Heterotetramer of two alpha chains and two beta chains. Red blood cells.

Its function is as follows. Involved in oxygen transport from the lung to the various peripheral tissues. The polypeptide is Hemoglobin subunit alpha-A (HBAA) (Branta canadensis (Canada goose)).